Reading from the N-terminus, the 954-residue chain is Leucine--tRNA ligase (954 aa).

Positions P40 to H51 match the 'HIGH' region motif. The 'KMSKS' region signature appears at K729–S733. ATP is bound at residue K732.

The protein belongs to the class-I aminoacyl-tRNA synthetase family.

The protein resides in the cytoplasm. It carries out the reaction tRNA(Leu) + L-leucine + ATP = L-leucyl-tRNA(Leu) + AMP + diphosphate. This Flavobacterium johnsoniae (strain ATCC 17061 / DSM 2064 / JCM 8514 / BCRC 14874 / CCUG 350202 / NBRC 14942 / NCIMB 11054 / UW101) (Cytophaga johnsonae) protein is Leucine--tRNA ligase.